A 139-amino-acid polypeptide reads, in one-letter code: Large ribosomal subunit protein uL16 (139 aa).

Over residues 1 to 17 (MLQPKRTKYRKQQKGRM) the composition is skewed to basic residues. Positions 1–25 (MLQPKRTKYRKQQKGRMKGLSQRGH) are disordered.

The protein belongs to the universal ribosomal protein uL16 family. As to quaternary structure, part of the 50S ribosomal subunit.

In terms of biological role, binds 23S rRNA and is also seen to make contacts with the A and possibly P site tRNAs. This chain is Large ribosomal subunit protein uL16, found in Christiangramia forsetii (strain DSM 17595 / CGMCC 1.15422 / KT0803) (Gramella forsetii).